A 1156-amino-acid chain; its full sequence is Nitric oxide synthase, inducible (1156 aa).

Residues 23 to 27 (DINNN) carry the DINNN-motif; mediates interaction with SPSB1, SPSB2 and SPSB4 motif. Positions 27-84 (NVGKFYQPPSSPVTQDDPKRHSPGKHGNESPQPLTGTVKTSPESLSKLDAPPSACPRH) are disordered. Positions 55 to 70 (ESPQPLTGTVKTSPES) are enriched in polar residues. Cys110 and Cys115 together coordinate Zn(2+). (6R)-L-erythro-5,6,7,8-tetrahydrobiopterin is bound at residue Ser118. Position 200 (Cys200) interacts with heme b. Residues Gln263, Trp372, Tyr373, and Glu377 each contribute to the L-arginine site. Arg381, Ile462, Trp463, and Phe476 together coordinate (6R)-L-erythro-5,6,7,8-tetrahydrobiopterin. Tyr491 provides a ligand contact to heme b. Positions 515–535 (FKVLVKAVFFASVLMHKAMAS) are calmodulin-binding. In terms of domain architecture, Flavodoxin-like spans 539–677 (ATILFATETG…AFRSWAVQTF (139 aa)). Residues Thr545, Glu546, Thr547, Arg549, and Ser550 each coordinate FMN. A Phosphotyrosine modification is found at Tyr575. FMN-binding residues include Ser591, Thr592, Ser628, Cys635, Glu661, and Gln665. In terms of domain architecture, FAD-binding FR-type spans 730–970 (KHVFTMRLKS…VRSASGFQLP (241 aa)). Arg750 contributes to the NADP(+) binding site. His772, Arg906, Tyr908, Ser909, Thr924, and Ala926 together coordinate FAD. Thr929 is an NADP(+) binding site. Residues Tyr930, Val943, Cys944, and Ser945 each coordinate FAD. The NADP(+) site is built by Thr984, Arg1017, Ser1046, Arg1047, Lys1053, Tyr1055, Gln1057, and Asp1090.

It belongs to the NOS family. Homodimer. Interacts with NHERF1. Interacts with GAPDH; induced by oxidatively-modified low-densitity lipoprotein (LDL(ox)). Interacts with S100A8 and S100A9 to form the iNOS-S100A8/9 transnitrosylase complex. Interacts with SPSB1, SPSB2 and SPSB4. Interacts with ELOC and CUL5 in the presence of SPSB1 or SPSB2 or SPSB4. Forms a complex with ASL, ASS1 and HSP90AA1; the complex regulates cell-autonomous L-arginine synthesis and citrulline recycling while channeling extracellular L-arginine to nitric oxide synthesis pathway. The cofactor is heme b. It depends on FAD as a cofactor. FMN is required as a cofactor. Requires (6R)-L-erythro-5,6,7,8-tetrahydrobiopterin as cofactor. Polyubiquitinated; mediated by SPSB1, SPSB2 and SPSB4, leading to proteasomal degradation.

It localises to the cytoplasm. Its subcellular location is the cytosol. The catalysed reaction is 2 L-arginine + 3 NADPH + 4 O2 + H(+) = 2 L-citrulline + 2 nitric oxide + 3 NADP(+) + 4 H2O. With respect to regulation, regulated by calcium/calmodulin. Produces nitric oxide (NO) which is a messenger molecule with diverse functions throughout the body. In macrophages, NO mediates tumoricidal and bactericidal actions. Also has nitrosylase activity and mediates cysteine S-nitrosylation of cytoplasmic target proteins such PTGS2/COX2. As component of the iNOS-S100A8/9 transnitrosylase complex involved in the selective inflammatory stimulus-dependent S-nitrosylation of GAPDH implicated in regulation of the GAIT complex activity and probably multiple targets including ANXA5, EZR, MSN and VIM. Involved in inflammation, enhances the synthesis of pro-inflammatory mediators such as IL6 and IL8. The polypeptide is Nitric oxide synthase, inducible (NOS2) (Bos taurus (Bovine)).